The following is a 974-amino-acid chain: RING finger protein nhl-1 (974 aa).

A disordered region spans residues 1–29; the sequence is MSSSPQNEAEAREKMRELMSRPPSSRPAD. Basic and acidic residues predominate over residues 9–19; the sequence is AEAREKMRELM. The RING-type zinc-finger motif lies at 43–84; sequence CPICLDRYKQPKLLPCQHTFCYPCLESCADTLHRNLKCPECR. Disordered regions lie at residues 360–395 and 416–548; these read VKSD…IRYR and SLLT…DFPV. Polar residues predominate over residues 416-431; sequence SLLTTSVTADSSSRTS. The segment covering 437 to 446 has biased composition (basic and acidic residues); the sequence is RVTRSVEPTK. The span at 447-465 shows a compositional bias: polar residues; sequence SRPTSLIVPNTETPRTVSP. The span at 488–501 shows a compositional bias: pro residues; sequence APLPQLPIRKPPLP. The segment covering 511-528 has biased composition (basic and acidic residues); the sequence is LNEKVETIRRAHQQRQDA. A compositionally biased stretch (low complexity) spans 529-538; that stretch reads SRAASRAVSS. 6 NHL repeats span residues 699 to 742, 746 to 788, 792 to 835, 839 to 883, 887 to 930, and 934 to 974; these read RAVF…FDKD, VRQF…FGLE, LFSF…FDKN, IAKF…FDPH, LFSF…FDAQ, and VSSF…IQIF.

In terms of assembly, interacts with ubc-13.

This Caenorhabditis elegans protein is RING finger protein nhl-1.